Here is a 660-residue protein sequence, read N- to C-terminus: UvrABC system protein C (660 aa).

The 80-residue stretch at 16 to 95 folds into the GIY-YIG domain; that stretch reads ESPGVYRFRD…IKQYDPRFNV (80 aa). The region spanning 208–243 is the UVR domain; sequence DAMVRRLEREMAEASAELEFERAARLRDDLAALRRA. The interval 469 to 501 is disordered; sequence GEAGVESAGDPDAPAGPDAPDEPRVGTLVDPTT. Residues 476–486 show a composition bias toward low complexity; it reads AGDPDAPAGPD.

This sequence belongs to the UvrC family. As to quaternary structure, interacts with UvrB in an incision complex.

It is found in the cytoplasm. Its function is as follows. The UvrABC repair system catalyzes the recognition and processing of DNA lesions. UvrC both incises the 5' and 3' sides of the lesion. The N-terminal half is responsible for the 3' incision and the C-terminal half is responsible for the 5' incision. This Salinispora arenicola (strain CNS-205) protein is UvrABC system protein C.